The following is a 218-amino-acid chain: Glutathione S-transferase Mu 7 (218 aa).

In terms of domain architecture, GST N-terminal spans 1-88 (MPMTLGYWDI…YLGRKHNLCG (88 aa)). Residues 7 to 8 (YW), 46 to 50 (WLNEK), 59 to 60 (NL), and 72 to 73 (QS) contribute to the glutathione site. One can recognise a GST C-terminal domain in the interval 90–208 (TEEERIRVDI…KTSRFLPRPM (119 aa)). Tyr-116 serves as a coordination point for substrate.

It belongs to the GST superfamily. Mu family. As to quaternary structure, homodimer.

The protein localises to the cytoplasm. The enzyme catalyses RX + glutathione = an S-substituted glutathione + a halide anion + H(+). Its function is as follows. Conjugation of reduced glutathione to a wide number of exogenous and endogenous hydrophobic electrophiles. The protein is Glutathione S-transferase Mu 7 (Gstm7) of Mus musculus (Mouse).